Consider the following 658-residue polypeptide: DNA mismatch repair protein MutL (658 aa).

The segment covering 114 to 130 has biased composition (basic and acidic residues); sequence RQEDSSHATQVKAEDGK. 3 disordered regions span residues 114–137, 369–401, and 438–457; these read RQED…PTAA, DYPT…APQQ, and FGNM…LSDG.

The protein belongs to the DNA mismatch repair MutL/HexB family.

Functionally, this protein is involved in the repair of mismatches in DNA. It is required for dam-dependent methyl-directed DNA mismatch repair. May act as a 'molecular matchmaker', a protein that promotes the formation of a stable complex between two or more DNA-binding proteins in an ATP-dependent manner without itself being part of a final effector complex. The sequence is that of DNA mismatch repair protein MutL from Neisseria meningitidis serogroup A / serotype 4A (strain DSM 15465 / Z2491).